Reading from the N-terminus, the 412-residue chain is Gamma-glutamyl phosphate reductase (412 aa).

The protein belongs to the gamma-glutamyl phosphate reductase family.

It is found in the cytoplasm. It carries out the reaction L-glutamate 5-semialdehyde + phosphate + NADP(+) = L-glutamyl 5-phosphate + NADPH + H(+). The protein operates within amino-acid biosynthesis; L-proline biosynthesis; L-glutamate 5-semialdehyde from L-glutamate: step 2/2. Functionally, catalyzes the NADPH-dependent reduction of L-glutamate 5-phosphate into L-glutamate 5-semialdehyde and phosphate. The product spontaneously undergoes cyclization to form 1-pyrroline-5-carboxylate. The sequence is that of Gamma-glutamyl phosphate reductase from Streptococcus suis (strain 98HAH33).